The following is a 588-amino-acid chain: Cryptochrome-1 (588 aa).

A Photolyase/cryptochrome alpha/beta domain is found at 3 to 132 (VNAVHWFRKG…EVIVRISHTL (130 aa)). Lys11 is covalently cross-linked (Glycyl lysine isopeptide (Lys-Gly) (interchain with G-Cter in ubiquitin)). The LIR 1 signature appears at 50–54 (NRWRF). Ser71 is modified (phosphoserine; by AMPK). Residues 82-87 (DVFPRL) carry the LIR 2 motif. A Glycyl lysine isopeptide (Lys-Gly) (interchain with G-Cter in ubiquitin) cross-link involves residue Lys107. The short motif at 151 to 156 (KRFQTL) is the LIR 3 element. A Glycyl lysine isopeptide (Lys-Gly) (interchain with G-Cter in ubiquitin) cross-link involves residue Lys159. Residue Ser247 is modified to Phosphoserine; by MAPK. Ser252 serves as a coordination point for FAD. 2 consecutive short sequence motifs (LIR) follow at residues 255–260 (LRFGCL) and 271–276 (DLYKKV). The residue at position 280 (Ser280) is a Phosphoserine; by AMPK. An LIR 6 motif is present at residues 285–290 (SLYGQL). Residue Gln289 coordinates FAD. A Glycyl lysine isopeptide (Lys-Gly) (interchain with G-Cter in ubiquitin) cross-link involves residue Lys329. The LIR 7 motif lies at 335–339 (TGFPW). His355 is a binding site for FAD. A required for inhibition of CLOCK-BMAL1-mediated transcription region spans residues 371-470 (WISWEEGMKV…LIGVNYPKPM (100 aa)). The LIR 8 motif lies at 379 to 384 (KVFEEL). 387–389 (DAD) provides a ligand contact to FAD. 3 consecutive short sequence motifs (LIR) follow at residues 395–400 (GSWMWL), 411–416 (HCYCPV), and 430–435 (RRYLPV). The interval 471–493 (VNHAEASRLNIERMKQIYQQLSR) is interaction with TIMELESS. Residue Lys485 forms a Glycyl lysine isopeptide (Lys-Gly) (interchain with G-Cter in ubiquitin) linkage. 2 consecutive short sequence motifs (LIR) follow at residues 486–491 (QIYQQL) and 492–497 (SRYRGL). A disordered region spans residues 511–588 (GGLMGYAPGE…GPKVQRQSSN (78 aa)). Positions 545–568 (DSQQTNPLKQGRSSMGTGLSSGKR) are enriched in polar residues. Residue Lys567 forms a Glycyl lysine isopeptide (Lys-Gly) (interchain with G-Cter in ubiquitin) linkage. At Ser570 the chain carries Phosphoserine.

The protein belongs to the DNA photolyase class-1 family. Component of the circadian core oscillator, which includes the CRY proteins, CLOCK or NPAS2, BMAL1 or BMAL2, CSNK1D and/or CSNK1E, TIMELESS, and the PER proteins. Interacts directly with TIMELESS. Interacts directly with PER1, PER2 and PER3; interaction with PER2 inhibits its ubiquitination and vice versa. Interacts with FBXL21. Interacts with FBXL3. Interacts with CLOCK-BMAL1 independently of PER2 and DNA. Interacts with HDAC1, HDAC2 and SIN3B. Interacts with nuclear receptors AR, NR1D1, NR3C1/GR, RORA and RORC; the interaction with at least NR3C1/GR is ligand dependent. Interacts with PRKDC. Interacts with the G protein subunit alpha GNAS; the interaction may block GPCR-mediated regulation of cAMP concentrations. Interacts with PRMT5. Interacts with EZH2. Interacts with MYBBP1A, DOCK7, HNRNPU, RPL7A, RPL8 and RPS3. Interacts with PPP5C (via TPR repeats). Interacts with MAP1LC3B. Interacts with CLOCK. Interacts with BMAL1. Interacts weakly with HDAC3; this interaction is enhanced in the presence of FBXL3. Interacts with TRIM28, KCTD5 and DDB1. Interacts with FOXO1. Interacts with DTL and DDB1-CUL4A complex. Interacts with HNF4A. Interacts with PSMD2 in a KDM8-dependent manner. Interacts with KDM8 in a FBXL3-dependent manner. Interacts with PPARG in a ligand-dependent manner. Interacts with PPARD (via domain NR LBD) and NR1I2 (via domain NR LBD) in a ligand-dependent manner. Interacts with PPARA, NR1I3 and VDR. The cofactor is FAD. Requires (6R)-5,10-methylene-5,6,7,8-tetrahydrofolate as cofactor. Post-translationally, phosphorylation on Ser-247 by MAPK is important for the inhibition of CLOCK-BMAL1-mediated transcriptional activity. Phosphorylation by CSNK1E requires interaction with PER1 or PER2. Phosphorylation at Ser-71 and Ser-280 by AMPK decreases protein stability. Phosphorylation at Ser-570 exhibits a robust circadian rhythm with a peak at CT8, increases protein stability, prevents SCF(FBXL3)-mediated degradation and is antagonized by interaction with PRKDC. In terms of processing, ubiquitinated by the SCF(FBXL3) and SCF(FBXL21) complexes, regulating the balance between degradation and stabilization. The SCF(FBXL3) complex is mainly nuclear and mediates ubiquitination and subsequent degradation of CRY1. In contrast, cytoplasmic SCF(FBXL21) complex-mediated ubiquitination leads to stabilize CRY1 and counteract the activity of the SCF(FBXL3) complex. The SCF(FBXL3) and SCF(FBXL21) complexes probably mediate ubiquitination at different Lys residues. Ubiquitination at Lys-11 and Lys-107 are specifically ubiquitinated by the SCF(FBXL21) complex but not by the SCF(FBXL3) complex. Ubiquitination may be inhibited by PER2. Deubiquitinated by USP7. Undergoes autophagy-mediated degradation in the liver in a time-dependent manner. Autophagic degradation of CRY1 (an inhibitor of gluconeogenesis) occurs during periods of reduced feeding allowing induction of gluconeogenesis and maintenance of blood glucose levels.

The protein localises to the cytoplasm. The protein resides in the nucleus. Transcriptional repressor which forms a core component of the circadian clock. The circadian clock, an internal time-keeping system, regulates various physiological processes through the generation of approximately 24 hour circadian rhythms in gene expression, which are translated into rhythms in metabolism and behavior. It is derived from the Latin roots 'circa' (about) and 'diem' (day) and acts as an important regulator of a wide array of physiological functions including metabolism, sleep, body temperature, blood pressure, endocrine, immune, cardiovascular, and renal function. Consists of two major components: the central clock, residing in the suprachiasmatic nucleus (SCN) of the brain, and the peripheral clocks that are present in nearly every tissue and organ system. Both the central and peripheral clocks can be reset by environmental cues, also known as Zeitgebers (German for 'timegivers'). The predominant Zeitgeber for the central clock is light, which is sensed by retina and signals directly to the SCN. The central clock entrains the peripheral clocks through neuronal and hormonal signals, body temperature and feeding-related cues, aligning all clocks with the external light/dark cycle. Circadian rhythms allow an organism to achieve temporal homeostasis with its environment at the molecular level by regulating gene expression to create a peak of protein expression once every 24 hours to control when a particular physiological process is most active with respect to the solar day. Transcription and translation of core clock components (CLOCK, NPAS2, BMAL1, BMAL2, PER1, PER2, PER3, CRY1 and CRY2) plays a critical role in rhythm generation, whereas delays imposed by post-translational modifications (PTMs) are important for determining the period (tau) of the rhythms (tau refers to the period of a rhythm and is the length, in time, of one complete cycle). A diurnal rhythm is synchronized with the day/night cycle, while the ultradian and infradian rhythms have a period shorter and longer than 24 hours, respectively. Disruptions in the circadian rhythms contribute to the pathology of cardiovascular diseases, cancer, metabolic syndromes and aging. A transcription/translation feedback loop (TTFL) forms the core of the molecular circadian clock mechanism. Transcription factors, CLOCK or NPAS2 and BMAL1 or BMAL2, form the positive limb of the feedback loop, act in the form of a heterodimer and activate the transcription of core clock genes and clock-controlled genes (involved in key metabolic processes), harboring E-box elements (5'-CACGTG-3') within their promoters. The core clock genes: PER1/2/3 and CRY1/2 which are transcriptional repressors form the negative limb of the feedback loop and interact with the CLOCK|NPAS2-BMAL1|BMAL2 heterodimer inhibiting its activity and thereby negatively regulating their own expression. This heterodimer also activates nuclear receptors NR1D1/2 and RORA/B/G, which form a second feedback loop and which activate and repress BMAL1 transcription, respectively. CRY1 and CRY2 have redundant functions but also differential and selective contributions at least in defining the pace of the SCN circadian clock and its circadian transcriptional outputs. More potent transcriptional repressor in cerebellum and liver than CRY2, though more effective in lengthening the period of the SCN oscillator. On its side, CRY2 seems to play a critical role in tuning SCN circadian period by opposing the action of CRY1. With CRY2, is dispensable for circadian rhythm generation but necessary for the development of intercellular networks for rhythm synchrony. Capable of translocating circadian clock core proteins such as PER proteins to the nucleus. Interacts with CLOCK-BMAL1 independently of PER proteins and is found at CLOCK-BMAL1-bound sites, suggesting that CRY may act as a molecular gatekeeper to maintain CLOCK-BMAL1 in a poised and repressed state until the proper time for transcriptional activation. Represses the CLOCK-BMAL1 induced transcription of BHLHE40/DEC1, ATF4, MTA1, KLF10 and NAMPT. May repress circadian target genes expression in collaboration with HDAC1 and HDAC2 through histone deacetylation. Mediates the clock-control activation of ATR and modulates ATR-mediated DNA damage checkpoint. In liver, mediates circadian regulation of cAMP signaling and gluconeogenesis by binding to membrane-coupled G proteins and blocking glucagon-mediated increases in intracellular cAMP concentrations and CREB1 phosphorylation. Inhibits hepatic gluconeogenesis by decreasing nuclear FOXO1 levels that down-regulates gluconeogenic gene expression. Besides its role in the maintenance of the circadian clock, is also involved in the regulation of other processes. Represses glucocorticoid receptor NR3C1/GR-induced transcriptional activity by binding to glucocorticoid response elements (GREs). Plays a key role in glucose and lipid metabolism modulation, in part, through the transcriptional regulation of genes involved in these pathways, such as LEP or ACSL4. Represses PPARD and its target genes in the skeletal muscle and limits exercise capacity. Plays an essential role in the generation of circadian rhythms in the retina. Represses the transcriptional activity of NR1I2. This Rattus norvegicus (Rat) protein is Cryptochrome-1 (Cry1).